Consider the following 197-residue polypeptide: Xanthine phosphoribosyltransferase (197 aa).

Residues Leu-20 and Asn-27 each coordinate xanthine. Residue 128–132 (ANGQA) coordinates 5-phospho-alpha-D-ribose 1-diphosphate. Xanthine is bound at residue Lys-156.

This sequence belongs to the purine/pyrimidine phosphoribosyltransferase family. Xpt subfamily. In terms of assembly, homodimer.

It localises to the cytoplasm. The catalysed reaction is XMP + diphosphate = xanthine + 5-phospho-alpha-D-ribose 1-diphosphate. Its pathway is purine metabolism; XMP biosynthesis via salvage pathway; XMP from xanthine: step 1/1. Its function is as follows. Converts the preformed base xanthine, a product of nucleic acid breakdown, to xanthosine 5'-monophosphate (XMP), so it can be reused for RNA or DNA synthesis. The protein is Xanthine phosphoribosyltransferase of Bacillus anthracis (strain A0248).